Reading from the N-terminus, the 639-residue chain is AP2-like ethylene-responsive transcription factor CRL5 (639 aa).

2 disordered regions span residues 25 to 59 (PHMA…QQQH) and 258 to 277 (GRKR…HHRK). The segment covering 43-59 (QQQQQQQQQQHHQQQQH) has biased composition (low complexity). 2 DNA-binding regions (AP2/ERF) span residues 288–351 (QYRG…INFP) and 387–445 (MYRG…TNFD). Low complexity predominate over residues 547–561 (QQQQQHMSMSAASSL). A disordered region spans residues 547-579 (QQQQQHMSMSAASSLVTSLSNSREGSPDRGGGL).

The protein belongs to the AP2/ERF transcription factor family. AP2 subfamily. In terms of tissue distribution, highly expressed at the base of the stem. Expressed in stems. Expressed a low levels in crown roots and seeds. Expressed in the stem region where adventitious (crown) root initiation occurs.

The protein resides in the nucleus. In terms of biological role, acts as a positive regulator of adventitious (crown) root formation by promoting its initiation. Promotes adventitious root initiation through repression of cytokinin signaling by positively regulating the two-component response regulator RR1. Regulated by the auxin response factor and transcriptional activator ARF23/ARF1. The chain is AP2-like ethylene-responsive transcription factor CRL5 from Oryza sativa subsp. japonica (Rice).